The following is a 129-amino-acid chain: Virion-associated protein (129 aa).

2 coiled-coil regions span residues 1-31 (MANL…ILEL) and 38-59 (TKES…LIND). The interval 122-129 (PAGWPNQF) is capsid binding.

Belongs to the caulimovirus ORF III family. As to quaternary structure, homotetramer, through coiled-coil domain. Homotrimer when interacts with icosehadral capsid. Interacts with capsid protein, and with Movement protein.

Its subcellular location is the virion. The protein resides in the host cell junction. It is found in the host plasmodesma. Functionally, plays a role in virus cell-to-cell and plant-to-plant transmission. Interacts with virion icosahedral capsid and movement protein, thereby facilitating virion cell-to-cell transmission through plasmodesmata opened by viral movement protein. Also interacts with aphid transmission factor, attaching the virion to aphid stylet when the animal feeds on an virus infected plant. Aphid saliva may later detach the virion, inducing release of infectious particles when the animal feeds on a new plant. In Arabidopsis thaliana (Mouse-ear cress), this protein is Virion-associated protein.